The following is a 52-amino-acid chain: Large ribosomal subunit protein bL33 (52 aa).

Belongs to the bacterial ribosomal protein bL33 family.

The protein is Large ribosomal subunit protein bL33 of Helicobacter pylori (strain HPAG1).